The following is a 680-amino-acid chain: MALDGIRMPDGCYADGTWELSVHVTDLNRDVTLRVTGEVHIGGVMLKLVEKLDVKKDWSDHALWWEKKRTWLLKTHWTLDKCGIQADAKLQFTPQHKLLRLQLPNMKYVKVKVNFSDRVFKAVSDICKTFNIRHPEELSLLKKPRDPTKKKKKKLDDQSEDEALELEGPLIMPGSGSIYSSPGLYSKTMTPTYDAHDGSPLSPTSAWFGDSALSEGNPGILAVSQPVTSPEILAKMFKPQALLDKAKTNQGWLDSSRSLMEQDVKENEALLLRFKYYSFFDLNPKYDAIRINQLYEQAKWALLLEEIECTEEEMMMFAALQYHINKLSIMTSENHLNNSDKEVDEVDAALSDLEITLEGGKTSTILGDITSIPELADYIKVFKPKKLTLKGYKQYWCTFKDTSISCYKSREESSGTPAHQLNLRGCEVTPDVNISGQKFNIKLLIPVAEGMNEIWLRCDNEKQYAHWMAACRLASKGKTMADSSYNLEVQNILSFLKMQHLNPDPQLIPDQITTDVNPECLVSPRYLKKYKSKQITARILEAHQNVAQMSLIEAKMRFIQAWQSLPEFGITHFIARFQGGKREELIGIAYNRLIRMDASTGDAIKTWRFSNMKQWNVNWEIKMVTVEFADEVRLSFICTEVDCKVVHEFIGGYIFLSTRAKDQNESLDEEMFYKLTSGWV.

Residues 40-81 are interaction with membranes containing phosphatidylinositol phosphate; that stretch reads HIGGVMLKLVEKLDVKKDWSDHALWWEKKRTWLLKTHWTLDK. Residues 141–162 are disordered; it reads LKKPRDPTKKKKKKLDDQSEDE. Phosphoserine occurs at positions 159, 181, 339, and 351. Positions 189-661 constitute an FERM domain; that stretch reads MTPTYDAHDG…GYIFLSTRAK (473 aa). Positions 380-476 constitute a PH domain; it reads KVFKPKKLTL…WMAACRLASK (97 aa). An a 1,2-diacyl-sn-glycero-3-phospho-(1D-myo-inositol-3,4,5-trisphosphate)-binding site is contributed by K383. The residue at position 666 (S666) is a Phosphoserine.

The protein belongs to the kindlin family. As to quaternary structure, interacts with ITGB1; the interaction is inhibited in presence of ITGB1BP1. Interacts with FBLIM1. Interacts with active, unphosphorylated CTNNB1. Identified in a complex with CTNNB1 and TCF7L2/TCF4. Interacts with ILK, ITGB1 and ITGB3. As to expression, detected in adult heart muscle (at protein level). Detected in heart, skeletal muscle and testis.

The protein resides in the cytoplasm. Its subcellular location is the cell cortex. It localises to the cytoskeleton. The protein localises to the stress fiber. It is found in the cell junction. The protein resides in the focal adhesion. Its subcellular location is the membrane. It localises to the cell projection. The protein localises to the lamellipodium membrane. It is found in the nucleus. The protein resides in the myofibril. Its subcellular location is the sarcomere. It localises to the i band. The protein localises to the cell surface. Scaffolding protein that enhances integrin activation mediated by TLN1 and/or TLN2, but activates integrins only weakly by itself. Binds to membranes enriched in phosphoinositides. Enhances integrin-mediated cell adhesion onto the extracellular matrix and cell spreading; this requires both its ability to interact with integrins and with phospholipid membranes. Required for the assembly of focal adhesions. Participates in the connection between extracellular matrix adhesion sites and the actin cytoskeleton and also in the orchestration of actin assembly and cell shape modulation. Recruits FBLIM1 to focal adhesions. Plays a role in the TGFB1 and integrin signaling pathways. Stabilizes active CTNNB1 and plays a role in the regulation of transcription mediated by CTNNB1 and TCF7L2/TCF4 and in Wnt signaling. This chain is Fermitin family homolog 2 (Fermt2), found in Mus musculus (Mouse).